Consider the following 159-residue polypeptide: 2-C-methyl-D-erythritol 2,4-cyclodiphosphate synthase (159 aa).

2 residues coordinate a divalent metal cation: Asp10 and His12. 4-CDP-2-C-methyl-D-erythritol 2-phosphate-binding positions include 10-12 and 37-38; these read DVH and HS. An a divalent metal cation-binding site is contributed by His45. Residues 59 to 61, 64 to 68, 103 to 109, 135 to 138, Phe142, and Arg145 each bind 4-CDP-2-C-methyl-D-erythritol 2-phosphate; these read DIG, FLDTD, AQAPKML, and TTTE.

This sequence belongs to the IspF family. As to quaternary structure, homotrimer. The cofactor is a divalent metal cation.

The enzyme catalyses 4-CDP-2-C-methyl-D-erythritol 2-phosphate = 2-C-methyl-D-erythritol 2,4-cyclic diphosphate + CMP. It functions in the pathway isoprenoid biosynthesis; isopentenyl diphosphate biosynthesis via DXP pathway; isopentenyl diphosphate from 1-deoxy-D-xylulose 5-phosphate: step 4/6. Functionally, involved in the biosynthesis of isopentenyl diphosphate (IPP) and dimethylallyl diphosphate (DMAPP), two major building blocks of isoprenoid compounds. Catalyzes the conversion of 4-diphosphocytidyl-2-C-methyl-D-erythritol 2-phosphate (CDP-ME2P) to 2-C-methyl-D-erythritol 2,4-cyclodiphosphate (ME-CPP) with a corresponding release of cytidine 5-monophosphate (CMP). This Francisella tularensis subsp. tularensis (strain FSC 198) protein is 2-C-methyl-D-erythritol 2,4-cyclodiphosphate synthase.